The sequence spans 335 residues: Nucleoid-associated protein SeAg_B2375 (335 aa).

Belongs to the YejK family.

The protein resides in the cytoplasm. The protein localises to the nucleoid. The chain is Nucleoid-associated protein SeAg_B2375 from Salmonella agona (strain SL483).